The primary structure comprises 93 residues: UPF0298 protein lwe2074 (93 aa).

The protein belongs to the UPF0298 family.

The protein localises to the cytoplasm. The chain is UPF0298 protein lwe2074 from Listeria welshimeri serovar 6b (strain ATCC 35897 / DSM 20650 / CCUG 15529 / CIP 8149 / NCTC 11857 / SLCC 5334 / V8).